Here is a 419-residue protein sequence, read N- to C-terminus: Protein farnesyltransferase subunit beta (419 aa).

PFTB repeat units lie at residues Glu-68–Gly-109, Arg-119–Asn-160, Ile-167–Gly-208, Leu-215–Gln-256, and Ser-329–Gln-371. Residues His-193–Tyr-196 and Arg-235–Lys-238 contribute to the (2E,6E)-farnesyl diphosphate site. 2 residues coordinate Zn(2+): Asp-241 and Cys-243. Tyr-244–Trp-247 contributes to the (2E,6E)-farnesyl diphosphate binding site. A Zn(2+)-binding site is contributed by His-359.

It belongs to the protein prenyltransferase subunit beta family. Heterodimer of FTA and FTB. Zn(2+) serves as cofactor.

It catalyses the reaction L-cysteinyl-[protein] + (2E,6E)-farnesyl diphosphate = S-(2E,6E)-farnesyl-L-cysteinyl-[protein] + diphosphate. Its function is as follows. Catalyzes the transfer of a farnesyl moiety from farnesyl diphosphate to a cysteine at the fourth position from the C-terminus of several proteins. The beta subunit FTB is responsible for peptide-binding. This Pisum sativum (Garden pea) protein is Protein farnesyltransferase subunit beta (FTB).